We begin with the raw amino-acid sequence, 439 residues long: Mitochondrial distribution and morphology protein 12 (439 aa).

The SMP-LTD domain maps to 1-439 (MSIDVNWRSA…VYPSFWTFLI (439 aa)). Over residues 70–85 (YEEDDDDHTSDASEEL) the composition is skewed to acidic residues. Disordered regions lie at residues 70–102 (YEED…ELNE), 184–274 (SGWS…PPRM), and 353–386 (GSEQ…RHGG). Residues 197-212 (GRSERHAGMKHQRAEP) show a composition bias toward basic and acidic residues. A compositionally biased stretch (polar residues) spans 215–230 (DTSNSTSRPSTANTLP). The span at 231–240 (SHPSSSSKNS) shows a compositional bias: low complexity. Basic and acidic residues predominate over residues 247–261 (RNDHPSLHAGEHIED).

The protein belongs to the MDM12 family. As to quaternary structure, component of the ER-mitochondria encounter structure (ERMES) or MDM complex, composed of mmm1, mdm10, mdm12 and mdm34. A mmm1 homodimer associates with one molecule of mdm12 on each side in a pairwise head-to-tail manner, and the SMP-LTD domains of mmm1 and mdm12 generate a continuous hydrophobic tunnel for phospholipid trafficking.

It localises to the mitochondrion outer membrane. It is found in the endoplasmic reticulum membrane. Its function is as follows. Component of the ERMES/MDM complex, which serves as a molecular tether to connect the endoplasmic reticulum (ER) and mitochondria. Components of this complex are involved in the control of mitochondrial shape and protein biogenesis, and function in nonvesicular lipid trafficking between the ER and mitochondria. Mdm12 is required for the interaction of the ER-resident membrane protein mmm1 and the outer mitochondrial membrane-resident beta-barrel protein mdm10. The mdm12-mmm1 subcomplex functions in the major beta-barrel assembly pathway that is responsible for biogenesis of all mitochondrial outer membrane beta-barrel proteins, and acts in a late step after the SAM complex. The mdm10-mdm12-mmm1 subcomplex further acts in the TOM40-specific pathway after the action of the mdm12-mmm1 complex. Essential for establishing and maintaining the structure of mitochondria and maintenance of mtDNA nucleoids. This chain is Mitochondrial distribution and morphology protein 12, found in Neosartorya fischeri (strain ATCC 1020 / DSM 3700 / CBS 544.65 / FGSC A1164 / JCM 1740 / NRRL 181 / WB 181) (Aspergillus fischerianus).